Consider the following 581-residue polypeptide: Proline--tRNA ligase (581 aa).

Belongs to the class-II aminoacyl-tRNA synthetase family. ProS type 1 subfamily. As to quaternary structure, homodimer.

The protein resides in the cytoplasm. The enzyme catalyses tRNA(Pro) + L-proline + ATP = L-prolyl-tRNA(Pro) + AMP + diphosphate. Catalyzes the attachment of proline to tRNA(Pro) in a two-step reaction: proline is first activated by ATP to form Pro-AMP and then transferred to the acceptor end of tRNA(Pro). As ProRS can inadvertently accommodate and process non-cognate amino acids such as alanine and cysteine, to avoid such errors it has two additional distinct editing activities against alanine. One activity is designated as 'pretransfer' editing and involves the tRNA(Pro)-independent hydrolysis of activated Ala-AMP. The other activity is designated 'posttransfer' editing and involves deacylation of mischarged Ala-tRNA(Pro). The misacylated Cys-tRNA(Pro) is not edited by ProRS. The protein is Proline--tRNA ligase of Polaromonas naphthalenivorans (strain CJ2).